The primary structure comprises 319 residues: Biotin synthase (319 aa).

Positions 44–273 constitute a Radical SAM core domain; that stretch reads IHGDGIDLCS…EAKIRLAGGR (230 aa). Cys62, Cys66, and Cys69 together coordinate [4Fe-4S] cluster. [2Fe-2S] cluster contacts are provided by Ser106, Cys138, Cys198, and Arg268.

It belongs to the radical SAM superfamily. Biotin synthase family. Homodimer. [4Fe-4S] cluster is required as a cofactor. Requires [2Fe-2S] cluster as cofactor.

It carries out the reaction (4R,5S)-dethiobiotin + (sulfur carrier)-SH + 2 reduced [2Fe-2S]-[ferredoxin] + 2 S-adenosyl-L-methionine = (sulfur carrier)-H + biotin + 2 5'-deoxyadenosine + 2 L-methionine + 2 oxidized [2Fe-2S]-[ferredoxin]. It participates in cofactor biosynthesis; biotin biosynthesis; biotin from 7,8-diaminononanoate: step 2/2. Catalyzes the conversion of dethiobiotin (DTB) to biotin by the insertion of a sulfur atom into dethiobiotin via a radical-based mechanism. The protein is Biotin synthase of Clostridium perfringens (strain 13 / Type A).